A 225-amino-acid polypeptide reads, in one-letter code: MFKHEKQLLNGMQVKVERENPQYAVLMQEQLGGANGELKAAMQYLSQSFRVKDQALKDLFLDIGTEELSHMEIVAETINLLNGHSVNYEVVGVGEVESHVLSGLTPFLVNSSGEPWTANYVSVTGDIVADLLSNIASEQRAKVVYEYLYRQINDKEVRRTIDFLLNREEAHNALFREALNKVKNEGSNKDFGVTEDSKLYFDLSTPGRYVQDPNPTEPSFSNPRR.

E37 serves as a coordination point for Mn(2+). Ca(2+)-binding residues include D58 and D62. 4 residues coordinate Mn(2+): E67, H70, E138, and H171. S204 is a binding site for Ca(2+). The disordered stretch occupies residues 204 to 225 (STPGRYVQDPNPTEPSFSNPRR). Residues 213-225 (PNPTEPSFSNPRR) are compositionally biased toward polar residues.

This sequence belongs to the manganese catalase family. Requires Ca(2+) as cofactor. The cofactor is Mn(2+).

The catalysed reaction is 2 H2O2 = O2 + 2 H2O. Functionally, catalyzes the decomposition of hydrogen peroxide into water and oxygen. This Clostridium acetobutylicum (strain ATCC 824 / DSM 792 / JCM 1419 / IAM 19013 / LMG 5710 / NBRC 13948 / NRRL B-527 / VKM B-1787 / 2291 / W) protein is Probable manganese catalase.